A 656-amino-acid chain; its full sequence is Pentatricopeptide repeat-containing protein At1g62260, mitochondrial (656 aa).

PPR repeat units lie at residues 70 to 104 (NTVT…DVVT), 105 to 134 (WNTM…MPSR), 135 to 169 (DSFS…NAVS), 170 to 200 (WSAM…DSSP), 203 to 227 (ALVA…YGSL), 234 to 264 (LVYA…IPDL), 280 to 310 (NVVS…MKDR), 311 to 345 (DTIS…DAHS), 346 to 372 (WNMM…TPEK), 373 to 407 (HTVS…GEKP), 408 to 438 (DPHT…VVKT), 442 to 472 (DVPV…MKLK), 474 to 508 (EVIT…GIYP), 509 to 544 (SHIT…KIEP), and 545 to 575 (QMEH…MPFE). Residues 580 to 655 (VWGALLDACR…ERGSSWVDSS (76 aa)) are type E motif.

The protein belongs to the PPR family. PCMP-E subfamily.

The protein localises to the mitochondrion. The polypeptide is Pentatricopeptide repeat-containing protein At1g62260, mitochondrial (PCMP-E10) (Arabidopsis thaliana (Mouse-ear cress)).